Consider the following 388-residue polypeptide: Succinate--CoA ligase [ADP-forming] subunit beta (388 aa).

The region spanning 9–244 (KQIFAKYKLP…PSQDDPREAL (236 aa)) is the ATP-grasp domain. ATP-binding positions include K46, 53-55 (GRG), E99, A102, and E107. Mg(2+)-binding residues include N199 and D213. Substrate is bound by residues N264 and 321–323 (GIV).

It belongs to the succinate/malate CoA ligase beta subunit family. As to quaternary structure, heterotetramer of two alpha and two beta subunits. Requires Mg(2+) as cofactor.

It catalyses the reaction succinate + ATP + CoA = succinyl-CoA + ADP + phosphate. It carries out the reaction GTP + succinate + CoA = succinyl-CoA + GDP + phosphate. It functions in the pathway carbohydrate metabolism; tricarboxylic acid cycle; succinate from succinyl-CoA (ligase route): step 1/1. Functionally, succinyl-CoA synthetase functions in the citric acid cycle (TCA), coupling the hydrolysis of succinyl-CoA to the synthesis of either ATP or GTP and thus represents the only step of substrate-level phosphorylation in the TCA. The beta subunit provides nucleotide specificity of the enzyme and binds the substrate succinate, while the binding sites for coenzyme A and phosphate are found in the alpha subunit. The protein is Succinate--CoA ligase [ADP-forming] subunit beta of Glaesserella parasuis serovar 5 (strain SH0165) (Haemophilus parasuis).